The chain runs to 89 residues: Small ribosomal subunit protein uS15 (89 aa).

This sequence belongs to the universal ribosomal protein uS15 family. Part of the 30S ribosomal subunit. Forms a bridge to the 50S subunit in the 70S ribosome, contacting the 23S rRNA.

In terms of biological role, one of the primary rRNA binding proteins, it binds directly to 16S rRNA where it helps nucleate assembly of the platform of the 30S subunit by binding and bridging several RNA helices of the 16S rRNA. Functionally, forms an intersubunit bridge (bridge B4) with the 23S rRNA of the 50S subunit in the ribosome. The polypeptide is Small ribosomal subunit protein uS15 (Pseudoalteromonas atlantica (strain T6c / ATCC BAA-1087)).